A 352-amino-acid chain; its full sequence is Probable protein kinase DDB_G0291842 (352 aa).

Positions 1–57 (MRPLPDQSAFEDKSELVSKKQKNEDENNENRSPETPRTPKVCPKTPTKTPLRTPTKN) are disordered. Residues 10–34 (FEDKSELVSKKQKNEDENNENRSPE) are compositionally biased toward basic and acidic residues. The segment covering 38 to 56 (TPKVCPKTPTKTPLRTPTK) has biased composition (low complexity). In terms of domain architecture, Protein kinase spans 77 to 331 (FEYINQIGEG…IQSLLKYDKL (255 aa)). ATP-binding positions include 83 to 91 (IGEGSFAKV) and Lys-106. The active-site Proton acceptor is Asp-207. Asn-212 and Asp-225 together coordinate Mg(2+).

The protein belongs to the protein kinase superfamily. Ser/Thr protein kinase family. WEE1 subfamily.

It carries out the reaction L-seryl-[protein] + ATP = O-phospho-L-seryl-[protein] + ADP + H(+). It catalyses the reaction L-threonyl-[protein] + ATP = O-phospho-L-threonyl-[protein] + ADP + H(+). This is Probable protein kinase DDB_G0291842 from Dictyostelium discoideum (Social amoeba).